Consider the following 368-residue polypeptide: MNNKCKIINRRKSDRIYVGKVAIGNNAPISVQSMTNTRTTNISETINQILELQKVGVDIVRISIPNLKAAESFKEIKKQTNVPLIADIHFDYRLALQAIKYGADCLRINPGNIGNKRRVSEIISYAKDENIPIRIGVNAGSLEKDILKKYKIPTPDALVESAMRHIEYFDALNFNQFKVSVKASDVFLAIESYRMLGKKITQPLHIGITESGGLRNGTVKSSIGIALLLLEGIGDTIRVSLAAHPTEEVKVGYDILKVLSLRARGINFIACPTCSRQEFDVINTVNQLEKNLEDISTPIDVSIIGCVVNGIGESKIATLGLAGSHKKSAFYEDGVRQKEKIKNEEIIEKMEIKIRKKIDKLNNSKKNN.

[4Fe-4S] cluster-binding residues include Cys271, Cys274, Cys306, and Glu313.

It belongs to the IspG family. [4Fe-4S] cluster serves as cofactor.

It carries out the reaction (2E)-4-hydroxy-3-methylbut-2-enyl diphosphate + oxidized [flavodoxin] + H2O + 2 H(+) = 2-C-methyl-D-erythritol 2,4-cyclic diphosphate + reduced [flavodoxin]. It participates in isoprenoid biosynthesis; isopentenyl diphosphate biosynthesis via DXP pathway; isopentenyl diphosphate from 1-deoxy-D-xylulose 5-phosphate: step 5/6. Functionally, converts 2C-methyl-D-erythritol 2,4-cyclodiphosphate (ME-2,4cPP) into 1-hydroxy-2-methyl-2-(E)-butenyl 4-diphosphate. This Buchnera aphidicola subsp. Acyrthosiphon pisum (strain APS) (Acyrthosiphon pisum symbiotic bacterium) protein is 4-hydroxy-3-methylbut-2-en-1-yl diphosphate synthase (flavodoxin).